The following is a 224-amino-acid chain: Small ribosomal subunit protein uS5 (224 aa).

The interval 1–40 is disordered; the sequence is MAEQPAGGQGAGDSRDSRGDRDSRGRRGDGGRGGRDRDGD. Positions 13-40 are enriched in basic and acidic residues; sequence DSRDSRGDRDSRGRRGDGGRGGRDRDGD. An S5 DRBM domain is found at 44-107; it reads YLERVVAINR…EEARKGFFRV (64 aa).

The protein belongs to the universal ribosomal protein uS5 family. As to quaternary structure, part of the 30S ribosomal subunit. Contacts proteins S4 and S8.

Its function is as follows. With S4 and S12 plays an important role in translational accuracy. In terms of biological role, located at the back of the 30S subunit body where it stabilizes the conformation of the head with respect to the body. The polypeptide is Small ribosomal subunit protein uS5 (Mycolicibacterium paratuberculosis (strain ATCC BAA-968 / K-10) (Mycobacterium paratuberculosis)).